The chain runs to 969 residues: Exoribonuclease II, mitochondrial (969 aa).

A mitochondrion-targeting transit peptide spans M1–K41. Over residues R28 to Q38 the composition is skewed to basic residues. A disordered region spans residues R28–Q54. The segment covering A40–D51 has biased composition (basic and acidic residues). Positions R522–Q853 constitute an RNB domain.

The protein belongs to the RNR ribonuclease family. As to quaternary structure, MSU1 and SUV3 are the two components of the mitochondrial degradosome (mtEXO).

It is found in the mitochondrion matrix. The enzyme catalyses Exonucleolytic cleavage in the 3'- to 5'-direction to yield nucleoside 5'-phosphates.. In terms of biological role, essential for mitochondrial biogenesis. Functionally, required for intron-independent turnover and processing of mitochondrial RNA. Participates in 3' mtRNA processing where it hydrolyzes single-stranded RNA or partially double-stranded RNA with 3' single-stranded tails. The polypeptide is Exoribonuclease II, mitochondrial (DSS1) (Saccharomyces cerevisiae (strain ATCC 204508 / S288c) (Baker's yeast)).